The sequence spans 222 residues: ATP-dependent dethiobiotin synthetase BioD (222 aa).

Residue 12-17 (DAGKTV) participates in ATP binding. Threonine 16 contacts Mg(2+). Lysine 37 is a catalytic residue. Position 41 (serine 41) interacts with substrate. Residues aspartate 54, 116 to 119 (EGAG), 176 to 177 (VQ), 206 to 208 (PYL), and glutamate 213 contribute to the ATP site. Mg(2+) is bound by residues aspartate 54 and glutamate 116.

Belongs to the dethiobiotin synthetase family. Homodimer. Mg(2+) serves as cofactor.

It is found in the cytoplasm. The enzyme catalyses (7R,8S)-7,8-diammoniononanoate + CO2 + ATP = (4R,5S)-dethiobiotin + ADP + phosphate + 3 H(+). It functions in the pathway cofactor biosynthesis; biotin biosynthesis; biotin from 7,8-diaminononanoate: step 1/2. Catalyzes a mechanistically unusual reaction, the ATP-dependent insertion of CO2 between the N7 and N8 nitrogen atoms of 7,8-diaminopelargonic acid (DAPA, also called 7,8-diammoniononanoate) to form a ureido ring. The protein is ATP-dependent dethiobiotin synthetase BioD of Idiomarina loihiensis (strain ATCC BAA-735 / DSM 15497 / L2-TR).